A 272-amino-acid polypeptide reads, in one-letter code: Dermonecrotic toxin LvSicTox-alphaIC1aiii (272 aa).

His-4 is an active-site residue. The Mg(2+) site is built by Glu-24 and Asp-26. The active-site Nucleophile is His-40. Cystine bridges form between Cys-44–Cys-50 and Cys-46–Cys-189. Position 84 (Asp-84) interacts with Mg(2+).

This sequence belongs to the arthropod phospholipase D family. Class II subfamily. Mg(2+) serves as cofactor. Expressed by the venom gland.

It is found in the secreted. The enzyme catalyses an N-(acyl)-sphingosylphosphocholine = an N-(acyl)-sphingosyl-1,3-cyclic phosphate + choline. It carries out the reaction an N-(acyl)-sphingosylphosphoethanolamine = an N-(acyl)-sphingosyl-1,3-cyclic phosphate + ethanolamine. It catalyses the reaction a 1-acyl-sn-glycero-3-phosphocholine = a 1-acyl-sn-glycero-2,3-cyclic phosphate + choline. The catalysed reaction is a 1-acyl-sn-glycero-3-phosphoethanolamine = a 1-acyl-sn-glycero-2,3-cyclic phosphate + ethanolamine. Its function is as follows. Dermonecrotic toxins cleave the phosphodiester linkage between the phosphate and headgroup of certain phospholipids (sphingolipid and lysolipid substrates), forming an alcohol (often choline) and a cyclic phosphate. This toxin acts on sphingomyelin (SM). It may also act on ceramide phosphoethanolamine (CPE), lysophosphatidylcholine (LPC) and lysophosphatidylethanolamine (LPE), but not on lysophosphatidylserine (LPS), and lysophosphatidylglycerol (LPG). It acts by transphosphatidylation, releasing exclusively cyclic phosphate products as second products. Induces dermonecrosis, hemolysis, increased vascular permeability, edema, inflammatory response, and platelet aggregation. The protein is Dermonecrotic toxin LvSicTox-alphaIC1aiii of Loxosceles variegata (Recluse spider).